The following is a 180-amino-acid chain: Putative protein 33K (180 aa).

The tract at residues Leu31 to Pro108 is disordered. Residues Glu33–Gly43 show a composition bias toward basic and acidic residues. Residues Pro60–Glu78 show a composition bias toward acidic residues.

This chain is Putative protein 33K, found in Pantherophis guttatus (Corn snake).